The primary structure comprises 488 residues: Solute carrier family 41 member 3 (488 aa).

Composition is skewed to basic and acidic residues over residues 1–19 and 27–36; these read MEGTEARQRRLEGCGRLKE and DAGRLPKASE. The interval 1–36 is disordered; the sequence is MEGTEARQRRLEGCGRLKELGPLPSHDAGRLPKASE. The next 9 membrane-spanning stretches (helical) occupy residues 63–83, 147–167, 189–209, 220–240, 251–271, 284–304, 377–397, 406–426, and 450–470; these read LIIGFQVVIPFLLAGVGLSWA, LAVVQVQATVVGLLAAVASLM, VITAFLAALALGILMICIVIG, IATPIAASLGDLITLSILALM, WYLTPLVCVGFLALTPLWLFI, YGWFPIILAMIISSFGGLILS, VLLFLVVPGHLIFFYLICLVE, IFILLYLVAGVVQVVILLYLA, and GLGDLLGTSLLALCFFLDWLL.

The protein belongs to the SLC41A transporter family.

Its subcellular location is the mitochondrion inner membrane. The catalysed reaction is Mg(2+)(in) + 2 Na(+)(out) = Mg(2+)(out) + 2 Na(+)(in). Functionally, na(+)/Mg(2+) ion exchanger that acts as a predominant Mg(2+) efflux system at the mitochondrial inner membrane. The protein is Solute carrier family 41 member 3 (Slc41a3) of Mus musculus (Mouse).